The sequence spans 184 residues: Troponin I, slow skeletal muscle (184 aa).

N-acetylproline; partial is present on proline 1. The interval 1–45 (PEVERKSKITASRKLLKSLMLAKAKECQQEHEAREAEKVRYLAER) is involved in binding TNC. Serine 55 is modified (phosphoserine). An involved in binding TNC and actin region spans residues 94-115 (LKLKVLDLRGKFKRPPLRRVRV).

It belongs to the troponin I family. As to quaternary structure, binds to actin and tropomyosin. Post-translationally, in the muscle sample, approximately 25% of the chains were blocked. Pro-1 is probably acetylated. The N-terminus is blocked.

Its function is as follows. Troponin I is the inhibitory subunit of troponin, the thin filament regulatory complex which confers calcium-sensitivity to striated muscle actomyosin ATPase activity. The protein is Troponin I, slow skeletal muscle (TNNI1) of Oryctolagus cuniculus (Rabbit).